We begin with the raw amino-acid sequence, 347 residues long: S-adenosylmethionine:tRNA ribosyltransferase-isomerase (347 aa).

It belongs to the QueA family. In terms of assembly, monomer.

The protein resides in the cytoplasm. It catalyses the reaction 7-aminomethyl-7-carbaguanosine(34) in tRNA + S-adenosyl-L-methionine = epoxyqueuosine(34) in tRNA + adenine + L-methionine + 2 H(+). The protein operates within tRNA modification; tRNA-queuosine biosynthesis. In terms of biological role, transfers and isomerizes the ribose moiety from AdoMet to the 7-aminomethyl group of 7-deazaguanine (preQ1-tRNA) to give epoxyqueuosine (oQ-tRNA). This is S-adenosylmethionine:tRNA ribosyltransferase-isomerase from Pseudomonas aeruginosa (strain ATCC 15692 / DSM 22644 / CIP 104116 / JCM 14847 / LMG 12228 / 1C / PRS 101 / PAO1).